The following is a 212-amino-acid chain: uncharacterized protein (212 aa).

The chain crosses the membrane as a helical span at residues 5 to 25 (IFIILIAVLLIGVNIKKIAAA).

The protein resides in the membrane. This is an uncharacterized protein from Borreliella burgdorferi (strain ATCC 35210 / DSM 4680 / CIP 102532 / B31) (Borrelia burgdorferi).